The primary structure comprises 113 residues: Retrotransposon Gag-like protein 8C (113 aa).

The protein belongs to the FAM127 family.

The protein is Retrotransposon Gag-like protein 8C of Homo sapiens (Human).